The following is a 265-amino-acid chain: Seminal vesicle secretory protein 3A (265 aa).

Residues 1 to 20 (MKSIFFSLSLLLLLEKKAAG) form the signal peptide. A run of 5 repeats spans residues 116 to 119 (QIKS), 122 to 125 (QVKS), 129 to 132 (QLKS), 136 to 139 (QLKT), and 142 to 145 (QVKS). The 5 X 4 AA tandem repeats of Q-X-K-[ST] stretch occupies residues 116–145 (QIKSQTQVKSYAAQLKSQPGQLKTIGQVKS).

In terms of processing, glycosylated. Post-translationally, covalently cross-linked by transglutaminase, which is important for the formation of the gelatinous copulatory plug. Five repeats of Q-X-K-(S/T) in the central region of the protein serve as the transglutaminase substrate site(s). In terms of tissue distribution, highly expressed in the seminal vesicle where it is detected in luminal epithelium of the mucosa folds, and also in luminal fluid (at protein level). Not detected in other tissues tested.

The protein resides in the secreted. Its function is as follows. Component of the copulatory plug. The chain is Seminal vesicle secretory protein 3A from Mus musculus (Mouse).